Consider the following 148-residue polypeptide: Large ribosomal subunit protein bL9 (148 aa).

It belongs to the bacterial ribosomal protein bL9 family.

Functionally, binds to the 23S rRNA. This Listeria innocua serovar 6a (strain ATCC BAA-680 / CLIP 11262) protein is Large ribosomal subunit protein bL9.